A 409-amino-acid polypeptide reads, in one-letter code: Peptidase T (409 aa).

A Zn(2+)-binding site is contributed by histidine 80. Aspartate 82 is a catalytic residue. Aspartate 143 is a binding site for Zn(2+). Glutamate 177 serves as the catalytic Proton acceptor. Glutamate 178, aspartate 200, and histidine 382 together coordinate Zn(2+).

This sequence belongs to the peptidase M20B family. Zn(2+) is required as a cofactor.

It is found in the cytoplasm. It carries out the reaction Release of the N-terminal residue from a tripeptide.. Its function is as follows. Cleaves the N-terminal amino acid of tripeptides. In Alkaliphilus oremlandii (strain OhILAs) (Clostridium oremlandii (strain OhILAs)), this protein is Peptidase T.